Reading from the N-terminus, the 334-residue chain is Pre-mRNA leakage protein 39 (334 aa).

In terms of assembly, interacts with MLP1 and MLP2.

Its subcellular location is the nucleus membrane. Its function is as follows. Involved in the nuclear retention of improperly spliced pre-mRNAs. This chain is Pre-mRNA leakage protein 39 (PML39), found in Saccharomyces cerevisiae (strain ATCC 204508 / S288c) (Baker's yeast).